The following is a 162-amino-acid chain: Corticoliberin (162 aa).

The N-terminal stretch at 1-24 (MKLNFLVTTVALLVAFPPPYECRA) is a signal peptide. A propeptide spanning residues 25–119 (IEGSSNQPAT…ALDSVERERR (95 aa)) is cleaved from the precursor. Position 160 is a phenylalanine amide (phenylalanine 160).

This sequence belongs to the sauvagine/corticotropin-releasing factor/urotensin I family.

It localises to the secreted. Its function is as follows. This hormone from hypothalamus regulates the release of corticotropin from pituitary gland. In Carassius auratus (Goldfish), this protein is Corticoliberin (crh).